We begin with the raw amino-acid sequence, 344 residues long: Protein-arginine kinase (344 aa).

Residues 14 to 244 (IVLSSRIRLA…KQIIQQERLA (231 aa)) enclose the Phosphagen kinase C-terminal domain. Residues 17–21 (SSRIR), His81, Arg115, 166–170 (RASAM), and 197–202 (RGLYGE) contribute to the ATP site.

The protein belongs to the ATP:guanido phosphotransferase family.

The catalysed reaction is L-arginyl-[protein] + ATP = N(omega)-phospho-L-arginyl-[protein] + ADP + H(+). Functionally, catalyzes the specific phosphorylation of arginine residues in proteins. The sequence is that of Protein-arginine kinase from Clostridium novyi (strain NT).